We begin with the raw amino-acid sequence, 69 residues long: A-kinase anchor protein inhibitor 1 (69 aa).

The tract at residues 39-69 (QESLRREGRPGDSRAWGQLGGCELTKKHEKK) is disordered. Positions 41–50 (SLRREGRPGD) are enriched in basic and acidic residues.

As to quaternary structure, binds cAMP-dependent protein kinase (PKA). Interacts specifically with RII-regulatory subunits of PKA (PRKAR2A and PRKAR2B). In terms of tissue distribution, preferentially expressed in the neural tissues.

In terms of biological role, protein kinase A (PKA)-binding protein. Binds to type II regulatory subunits of protein kinase A (PKA) and may block the A-kinase anchoring protein (AKAP)-mediated subcellular localization of PKA. This Mus musculus (Mouse) protein is A-kinase anchor protein inhibitor 1.